We begin with the raw amino-acid sequence, 134 residues long: Large ribosomal subunit protein uL16 (134 aa).

Residues 1–20 (MLLQPKRTKFRKMHKGRNRG) are compositionally biased toward basic residues. Positions 1-21 (MLLQPKRTKFRKMHKGRNRGT) are disordered.

The protein belongs to the universal ribosomal protein uL16 family. In terms of assembly, part of the 50S ribosomal subunit.

In terms of biological role, binds 23S rRNA and is also seen to make contacts with the A and possibly P site tRNAs. This chain is Large ribosomal subunit protein uL16, found in Blochmanniella pennsylvanica (strain BPEN).